The following is a 520-amino-acid chain: MRVESGSAQERGILLESLSTLLEKTTASHEGRAPGNRELTDLLPPEVCSLLNPAAIYANNEISLRDVEVYGFDYDYTLAQYADALHPEIFSTARDILIEHYKYPEGIRKYDYNPSFAIRGLHYDIQKSLLMKIDAFHYVQLGTAYRGLQPVPDEEVIELYGGTQHIPLYQMSGFYGKGPSIKQFMDIFSLPEMALLSCVVDYFLGHSLEFDQAHLYKDVTDAIRDVHVKGLMYQWIEQDMEKYILRGDETFAVLSRLVAHGKQLFLITNSPFSFVDKGMRHMVGPDWRQLFDVVIVQADKPSFFTDRRKPFRKLDEKGSLQWDRITRLEKGKIYRQGNLFDFLRLTEWRGPRVLYFGDHLYSDLADLMLRHGWRTGAIIPELEREIRIINTEQYMHSLTWQQALTGLLERMQTYQDAESRQVLAAWMKERQELRCITKALFNAQFGSIFRTFHNPTYFSRRLVRFSDLYMASLSCLLNYRVDFTFYPRRTPLQHEAPLWMDQLCTGCMKTPFLGDMAHIR.

The active-site Nucleophile is the D73. Positions 73, 75, and 358 each coordinate Mg(2+). The active-site Proton donor is D75.

Belongs to the 5'(3')-deoxyribonucleotidase family. Interacts with tyrosine 3-monooxygenase TH; the interaction results in reduced phosphorylation and decreased catalytic activity of TH.

It localises to the cytoplasm. Functionally, promotes dephosphorylation of tyrosine 3-monooxygenase TH which decreases TH catalytic activity and leads to reduced synthesis of catecholamines including dopamine, noradrenaline and adrenaline. The exact mechanism of activity is unknown but may act as a phosphatase or promote the activity of phosphatases or may inhibit phosphorylation by acting as a barrier to interfere with protein kinase access. The protein is 5'-nucleotidase domain-containing protein 2 (NT5DC2) of Homo sapiens (Human).